The following is a 222-amino-acid chain: Large ribosomal subunit protein uL4 (222 aa).

Residues 67–87 (QKGTGNARAGSKRTNVRRGGG) form a disordered region.

The protein belongs to the universal ribosomal protein uL4 family. In terms of assembly, part of the 50S ribosomal subunit.

In terms of biological role, one of the primary rRNA binding proteins, this protein initially binds near the 5'-end of the 23S rRNA. It is important during the early stages of 50S assembly. It makes multiple contacts with different domains of the 23S rRNA in the assembled 50S subunit and ribosome. Functionally, forms part of the polypeptide exit tunnel. The polypeptide is Large ribosomal subunit protein uL4 (Rhodopirellula baltica (strain DSM 10527 / NCIMB 13988 / SH1)).